A 103-amino-acid chain; its full sequence is Large ribosomal subunit protein bL21 (103 aa).

The protein belongs to the bacterial ribosomal protein bL21 family. In terms of assembly, part of the 50S ribosomal subunit. Contacts protein L20.

This protein binds to 23S rRNA in the presence of protein L20. The protein is Large ribosomal subunit protein bL21 of Polaromonas sp. (strain JS666 / ATCC BAA-500).